Reading from the N-terminus, the 355-residue chain is MKITFSPELSIPCEVCKNQSNGYHFEVLSCGACASFFRRSVVSKIKYQCKDGKKRCQIRYLDRHFCRYCRFSKCVKAGMKAEKIQKNRDLDSSPTPTDQNNCIPSDVLHDDGILIKDIRGLFKQFNPHNASEGCSKLEKLTEGLQFIRRNQERECIKIIDEMDSESLKDVQFKVIGSCATWLLFSSFFQKLEENEKVVILERLWHGWTVLEFLSRSLEIFGNKVIDEKIVFISDNTAIRLITAFENSLKTASPKKSESIKKKLELSFSVIFDELALHFINWKPTEIEISYMQWQIVWSVAEQLLSGNSLEKGEHFTEQLSKDLHEYYVRELKLENYAFRIEKMMDIVQIVQNNFY.

Positions 10-86 (SIPCEVCKNQ…AGMKAEKIQK (77 aa)) form a DNA-binding region, nuclear receptor. NR C4-type zinc fingers lie at residues 13–33 (CEVC…CGAC) and 49–69 (CKDG…CRYC). The region spanning 126–355 (NPHNASEGCS…IVQIVQNNFY (230 aa)) is the NR LBD domain.

Belongs to the nuclear hormone receptor family.

Its subcellular location is the nucleus. Orphan nuclear receptor. May play a role in modulation of lifespan and immunity. This is Nuclear hormone receptor family member nhr-127 (nhr-127) from Caenorhabditis elegans.